The chain runs to 218 residues: Adenylate kinase (218 aa).

10-15 (GAGKGT) is an ATP binding site. An NMP region spans residues 30 to 59 (STGDMLRAAVKAGTPLGIEAKKVMDAGGLV). AMP contacts are provided by residues threonine 31, arginine 36, 57–59 (GLV), 85–88 (GFPR), and glutamine 92. The LID stretch occupies residues 122 to 159 (GRRSHAASGRTYHVKFNPPKVAGVDDVTGEPLIQRDDD). Residues arginine 123 and 132 to 133 (TY) each bind ATP. AMP is bound by residues arginine 156 and arginine 167. Glycine 203 contributes to the ATP binding site.

The protein belongs to the adenylate kinase family. As to quaternary structure, monomer.

It localises to the cytoplasm. It catalyses the reaction AMP + ATP = 2 ADP. Its pathway is purine metabolism; AMP biosynthesis via salvage pathway; AMP from ADP: step 1/1. Functionally, catalyzes the reversible transfer of the terminal phosphate group between ATP and AMP. Plays an important role in cellular energy homeostasis and in adenine nucleotide metabolism. The sequence is that of Adenylate kinase from Albidiferax ferrireducens (strain ATCC BAA-621 / DSM 15236 / T118) (Rhodoferax ferrireducens).